Reading from the N-terminus, the 475-residue chain is ATP synthase subunit beta, chloroplastic (475 aa).

ATP is bound at residue 156–163 (GGAGVGKT).

Belongs to the ATPase alpha/beta chains family. F-type ATPases have 2 components, CF(1) - the catalytic core - and CF(0) - the membrane proton channel. CF(1) has five subunits: alpha(3), beta(3), gamma(1), delta(1), epsilon(1). CF(0) has four main subunits: a(1), b(1), b'(1) and c(9-12).

The protein resides in the plastid. It localises to the chloroplast thylakoid membrane. The enzyme catalyses ATP + H2O + 4 H(+)(in) = ADP + phosphate + 5 H(+)(out). Produces ATP from ADP in the presence of a proton gradient across the membrane. The catalytic sites are hosted primarily by the beta subunits. This chain is ATP synthase subunit beta, chloroplastic, found in Gracilaria tenuistipitata var. liui (Red alga).